A 151-amino-acid chain; its full sequence is Aspartate carbamoyltransferase regulatory chain (151 aa).

Zn(2+) is bound by residues Cys107, Cys112, Cys135, and Cys138.

This sequence belongs to the PyrI family. As to quaternary structure, contains catalytic and regulatory chains. The cofactor is Zn(2+).

Functionally, involved in allosteric regulation of aspartate carbamoyltransferase. This Thermococcus gammatolerans (strain DSM 15229 / JCM 11827 / EJ3) protein is Aspartate carbamoyltransferase regulatory chain.